The primary structure comprises 63 residues: Large ribosomal subunit protein uL29 (63 aa).

Belongs to the universal ribosomal protein uL29 family.

This is Large ribosomal subunit protein uL29 from Haemophilus ducreyi (strain 35000HP / ATCC 700724).